Here is a 469-residue protein sequence, read N- to C-terminus: Ribulose bisphosphate carboxylase large chain (469 aa).

Lys-5 carries the N6,N6,N6-trimethyllysine modification. Positions 114 and 164 each coordinate substrate. The active-site Proton acceptor is Lys-166. Substrate is bound at residue Lys-168. Mg(2+) is bound by residues Lys-192, Asp-194, and Glu-195. Residue Lys-192 is modified to N6-carboxylysine. His-285 functions as the Proton acceptor in the catalytic mechanism. Arg-286, His-318, and Ser-370 together coordinate substrate.

It belongs to the RuBisCO large chain family. Type I subfamily. As to quaternary structure, heterohexadecamer of 8 large chains and 8 small chains; disulfide-linked. The disulfide link is formed within the large subunit homodimers. Mg(2+) serves as cofactor. Post-translationally, the disulfide bond which can form in the large chain dimeric partners within the hexadecamer appears to be associated with oxidative stress and protein turnover.

It is found in the plastid. It localises to the chloroplast. It carries out the reaction 2 (2R)-3-phosphoglycerate + 2 H(+) = D-ribulose 1,5-bisphosphate + CO2 + H2O. The enzyme catalyses D-ribulose 1,5-bisphosphate + O2 = 2-phosphoglycolate + (2R)-3-phosphoglycerate + 2 H(+). Its function is as follows. RuBisCO catalyzes two reactions: the carboxylation of D-ribulose 1,5-bisphosphate, the primary event in carbon dioxide fixation, as well as the oxidative fragmentation of the pentose substrate in the photorespiration process. Both reactions occur simultaneously and in competition at the same active site. This Nicandra physalodes (Apple-of-Peru) protein is Ribulose bisphosphate carboxylase large chain.